The chain runs to 333 residues: 2-oxoglutarate-dependent dioxygenase ucsF (333 aa).

Positions 174–296 constitute a Fe2OG dioxygenase domain; it reads NASELRLNHY…RYSIAYLCKA (123 aa). Positions 202, 204, and 264 each coordinate Fe cation. Residue R287 coordinates 2-oxoglutarate.

This sequence belongs to the iron/ascorbate-dependent oxidoreductase family. Fe(2+) serves as cofactor.

Its pathway is mycotoxin biosynthesis. 2-oxoglutarate-dependent dioxygenase; part of the gene cluster that mediates the biosynthesis of UCS1025A, a member of the pyrrolizidinone family that acts as a strong telomerase inhibitor and displays potent antibacterial and antitumor properties. These compounds share a hemiaminal-containing pyrrolizidinone core fused with a gamma-lactone, giving a furopyrrolizidine that is connected to a decalin fragment. The polyketide synthase module (PKS) of the PKS-NRPS ucsA is responsible for the synthesis of the polyketide backbone via the condensation of an acetyl-CoA starter unit with 6 malonyl-CoA units. The downstream nonribosomal peptide synthetase (NRPS) module then amidates the carboxyl end of the polyketide with a 2S,3S-methylproline derived from L-isoleucine by the 2-oxoglutarate-dependent dioxygenase ucsF which converts L-isoleucine to (4S,5S)-4-methylpyrroline-5-carboxylate that is further converted to 2S,3S-methylproline by the pyrroline-5-carboxylate reductase ucsG. Reductive release of the completed aminoacyl polyketide from the assembly line can form the 3-pyrrolin-2-one structure via an intramolecular Knoevenagel reaction. Because ucsA lacks a designated enoylreductase (ER) domain, the required activity is provided the enoyl reductase ucsL. This keto acyclic precursor is the substrate of the Diels-Alderase ucsH, that catalyzes the Diels-Alder cycloaddition. Oxidation of the 3S-methyl group to a carboxylate by the cytochrome P450 monooxygenase ucsK allows an oxa-Michael cyclization that might involve the reductase/dehydrogenase ucsI and which furnishes the furopyrrolizidine. The oxidase ucsJ likely plays a critical role in stereoselective reduction of the C5-C6 double bond to afford the required R-configured carboxylate group. Further enolization and oxidation at C5 by an unidentified enzyme affords the last intermediate that can undergo oxa-Michael cyclization to yield UCS1025A. The polypeptide is 2-oxoglutarate-dependent dioxygenase ucsF (Acremonium sp).